The following is a 358-amino-acid chain: MLRLLRSSWARGLGSGVATWRPSAGLFRPGCPGIRQASGASDTPHHQSPSSESPVQPVGVGVCSMMRLPLQSSPEGLDAAFIGVPLDTGTSNRPGARFGPCRIREESLMLGAVNPSTGALPFQSLRVADLGNVNVNLYNLQDSCLLIREAYQNVLAAGCIPLTLGGDQTITYPILQAVAKEHGPVGLVHVGAHTNTTDKPREEKVYHRTPFRRSVDEGLLDSKRVVQIGIRGSSRTLDPYRYSRSQGFRVVLAEDCWMKSLVPLMAEVRQQMGGKPLYISFAIDALDPAYAPGTGTPEIAGLTPSQALEIIRGCQGLNVVGCDLVEVSPPYDLSGNTALLAANLLFEMLCALPKVTTV.

The transit peptide at 1 to 36 (MLRLLRSSWARGLGSGVATWRPSAGLFRPGCPGIRQ) directs the protein to the mitochondrion. A disordered region spans residues 31 to 56 (CPGIRQASGASDTPHHQSPSSESPVQ). Low complexity predominate over residues 46–56 (HQSPSSESPVQ). Glutamine 168 and histidine 193 together coordinate Mn(2+). At lysine 199 the chain carries N6-acetyllysine. Lysine 223 is subject to N6-acetyllysine; alternate. N6-succinyllysine; alternate is present on lysine 223. Aspartate 284 is a Mn(2+) binding site.

This sequence belongs to the arginase family. Agmatinase subfamily. Mn(2+) is required as a cofactor. As to expression, detected only in liver.

It localises to the mitochondrion. It catalyses the reaction 3-guanidinopropanoate + H2O = urea + beta-alanine. The enzyme catalyses 4-guanidinobutanoate + H2O = urea + 4-aminobutanoate. The catalysed reaction is taurocyamine + H2O = urea + taurine. It carries out the reaction L-arginine + H2O = urea + L-ornithine. It participates in nitrogen metabolism; urea cycle; L-ornithine and urea from L-arginine: step 1/1. In terms of biological role, hydrolyzes linear guanidino acids to form urea and the corresponding amines. Displays specificity for substrates having a negatively charged head group and short chains including taurocyamine, guanidino propanoic and butanoic acids. May protect cells by detoxifying potentially harmful amounts of guanidino acids. Metabolizes L-arginine with low efficiency. The polypeptide is Guanidino acid hydrolase, mitochondrial (Agmat) (Mus musculus (Mouse)).